The following is a 259-amino-acid chain: uncharacterized protein (259 aa).

The protein belongs to the methyltransferase superfamily.

This is an uncharacterized protein from Mycobacteroides abscessus (strain ATCC 19977 / DSM 44196 / CCUG 20993 / CIP 104536 / JCM 13569 / NCTC 13031 / TMC 1543 / L948) (Mycobacterium abscessus).